The sequence spans 380 residues: Transcription factor Sox-17-alpha-A (380 aa).

Disordered stretches follow at residues 1–20 (MSSPDGGYASDDQNQGKCSV) and 40–59 (GEGKLKSDAGSANSRSKAEA). Positions 61–129 (IRRPMNAFMV…QHMQDHPNYK (69 aa)) form a DNA-binding region, HMG box. The 116-residue stretch at 264–379 (VSPVQGMMAC…TAVYYCNYPS (116 aa)) folds into the Sox C-terminal domain. The segment at 292–312 (HHQLHQAGQPSPPPEAQQMGR) is disordered. Residues 328–336 (TEFEQYLSY) carry the 9aaTAD motif. The required for transcriptional activity and interaction with ctnnb1 stretch occupies residues 329–334 (EFEQYL).

Interacts (via C-terminus) with ctnnb1/beta-catenin (via Armadillo repeats); this interaction is required for inhibition of wnt-signaling. In early gastrulae, expressed in the vegetal but not animal hemisphere. The vegetal region is fated to become endoderm, and endodermal expression continues throughout gastrulation and neurulation. At tailbud stages, expression is down-regulated and becomes restricted to the most posterior endoderm and the future liver/gall bladder region. By 3-7 days, endodermal expression is restricted to the gall bladder bud. Also expressed in the embryonic gut, with strong expression in the posterior gut during tailbud stages, but by stage 40, expression rises again in the anterior gut. Expressed at a low level in the adult kidney and spleen.

It is found in the nucleus. Functionally, transcriptional activator. Binds to the DNA sequence 5'-AACAAT-3'. All of the sox17 proteins are required for embryonic endoderm development and gastrulation movements, and show some redundancy in function. In addition, the sox17 proteins have distinct but overlapping roles in later gut development. Acts downstream of vegt-signaling in endoderm differentiation to induce a range of endodermal genes both directly (including endodermin and dhh/chh) and indirectly. Also represses wnt-responsive genes to inhibit wnt/beta-catenin signaling. This chain is Transcription factor Sox-17-alpha-A (sox17a-a), found in Xenopus laevis (African clawed frog).